An 89-amino-acid chain; its full sequence is Small ribosomal subunit protein uS14A (89 aa).

This sequence belongs to the universal ribosomal protein uS14 family. Part of the 30S ribosomal subunit. Contacts proteins S3 and S10.

Binds 16S rRNA, required for the assembly of 30S particles and may also be responsible for determining the conformation of the 16S rRNA at the A site. The polypeptide is Small ribosomal subunit protein uS14A (Staphylococcus aureus (strain MRSA252)).